We begin with the raw amino-acid sequence, 418 residues long: UDP-N-acetylglucosamine 1-carboxyvinyltransferase (418 aa).

Phosphoenolpyruvate is bound at residue 22 to 23 (KN). Residue arginine 92 participates in UDP-N-acetyl-alpha-D-glucosamine binding. Cysteine 116 acts as the Proton donor in catalysis. Cysteine 116 is subject to 2-(S-cysteinyl)pyruvic acid O-phosphothioketal. Aspartate 305 and valine 327 together coordinate UDP-N-acetyl-alpha-D-glucosamine.

This sequence belongs to the EPSP synthase family. MurA subfamily.

It is found in the cytoplasm. It catalyses the reaction phosphoenolpyruvate + UDP-N-acetyl-alpha-D-glucosamine = UDP-N-acetyl-3-O-(1-carboxyvinyl)-alpha-D-glucosamine + phosphate. Its pathway is cell wall biogenesis; peptidoglycan biosynthesis. Cell wall formation. Adds enolpyruvyl to UDP-N-acetylglucosamine. In Endomicrobium trichonymphae, this protein is UDP-N-acetylglucosamine 1-carboxyvinyltransferase.